The primary structure comprises 122 residues: Large ribosomal subunit protein uL29 (122 aa).

Phosphoserine is present on Ser12.

Belongs to the universal ribosomal protein uL29 family. As to quaternary structure, component of the large ribosomal subunit (LSU). Mature yeast ribosomes consist of a small (40S) and a large (60S) subunit. The 40S small subunit contains 1 molecule of ribosomal RNA (18S rRNA) and at least 33 different proteins. The large 60S subunit contains 3 rRNA molecules (25S, 5.8S and 5S rRNA) and at least 46 different proteins. uL29 is associated with the polypeptide exit tunnel.

It is found in the cytoplasm. It localises to the nucleus. Its subcellular location is the nucleolus. Functionally, component of the ribosome, a large ribonucleoprotein complex responsible for the synthesis of proteins in the cell. The small ribosomal subunit (SSU) binds messenger RNAs (mRNAs) and translates the encoded message by selecting cognate aminoacyl-transfer RNA (tRNA) molecules. The large subunit (LSU) contains the ribosomal catalytic site termed the peptidyl transferase center (PTC), which catalyzes the formation of peptide bonds, thereby polymerizing the amino acids delivered by tRNAs into a polypeptide chain. The nascent polypeptides leave the ribosome through a tunnel in the LSU and interact with protein factors that function in enzymatic processing, targeting, and the membrane insertion of nascent chains at the exit of the ribosomal tunnel. In Schizosaccharomyces pombe (strain 972 / ATCC 24843) (Fission yeast), this protein is Large ribosomal subunit protein uL29 (rpl35).